The sequence spans 69 residues: U-Asilidin(12)-Dg3b (69 aa).

An N-terminal signal peptide occupies residues 1-19 (MRFLNIFLFFAVMIAFVSA). Positions 20 to 33 (SPVLEEEEIDIEPR) are excised as a propeptide. Cystine bridges form between cysteine 36–cysteine 59, cysteine 45–cysteine 65, and cysteine 49–cysteine 67.

Belongs to the asilidin-12 family. In terms of tissue distribution, expressed by the venom gland.

The protein resides in the secreted. Functionally, the recombinant peptide moderately increases Kv11.1/KCNH2/ERG1 currents and shifts the voltage-dependence of the channel activation to hyperpolarised potentials. In vivo, induces neurotoxic effects when injected into insects (tested on L.cuprina and A.domesticus). The chain is U-Asilidin(12)-Dg3b from Dolopus genitalis (Giant Australian assassin fly).